A 307-amino-acid polypeptide reads, in one-letter code: tRNA dimethylallyltransferase (307 aa).

Gly-16 to Thr-23 contributes to the ATP binding site. Position 18–23 (Thr-18–Thr-23) interacts with substrate. Residues Asp-41–Leu-44 are interaction with substrate tRNA.

Belongs to the IPP transferase family. Monomer. Mg(2+) is required as a cofactor.

It catalyses the reaction adenosine(37) in tRNA + dimethylallyl diphosphate = N(6)-dimethylallyladenosine(37) in tRNA + diphosphate. Catalyzes the transfer of a dimethylallyl group onto the adenine at position 37 in tRNAs that read codons beginning with uridine, leading to the formation of N6-(dimethylallyl)adenosine (i(6)A). This is tRNA dimethylallyltransferase from Opitutus terrae (strain DSM 11246 / JCM 15787 / PB90-1).